Reading from the N-terminus, the 185-residue chain is ATP-dependent protease subunit HslV (185 aa).

Thr12 is a catalytic residue. The Na(+) site is built by Ser168, Cys171, and Thr174.

The protein belongs to the peptidase T1B family. HslV subfamily. A double ring-shaped homohexamer of HslV is capped on each side by a ring-shaped HslU homohexamer. The assembly of the HslU/HslV complex is dependent on binding of ATP.

Its subcellular location is the cytoplasm. The enzyme catalyses ATP-dependent cleavage of peptide bonds with broad specificity.. Allosterically activated by HslU binding. Its function is as follows. Protease subunit of a proteasome-like degradation complex believed to be a general protein degrading machinery. This chain is ATP-dependent protease subunit HslV, found in Jannaschia sp. (strain CCS1).